The chain runs to 63 residues: Jingdongin-1-MT1 (63 aa).

Positions 1–22 are cleaved as a signal peptide; that stretch reads MFTLKKSLLLLFFLGTINLSLC. Residues 23–44 constitute a propeptide, removed in mature form; the sequence is EQERDADEEERRDDDEMDVEVE. The cysteines at positions 57 and 63 are disulfide-linked.

This sequence belongs to the frog skin active peptide (FSAP) family. Brevinin subfamily. Expressed by the skin glands.

The protein localises to the secreted. Antimicrobial peptide. Active against some Gram-negative and a variety of Gram-positive bacterial strains. Active against fungus C.glabrata 090902 but not against C.neoformans 201211. Shows hemolytic activity against human erythrocytes. This chain is Jingdongin-1-MT1, found in Amolops mantzorum (Sichuan torrent frog).